A 256-amino-acid polypeptide reads, in one-letter code: MKVLLTNDDGFHANGIKVLKEIVMAAGIASEIWVVAPLSNCSGCGRSVGLRHAIEVYKVSDTEFIVNSTPSTTMFLGLKEIVGEKPDLVLSGINSGVNIGNDVTYSGTIAAAAEAAMMSIPSIAISQEYDGRSGEINWENPRKFLKGIVDMLLGAPSWDKSTVMSVNFPLISAKGIKFTSQGKYMPYNKIEKKKNAASSISYTIHRTAPDKDSRGESDDSIRALDDGYVTITPLKFDMTDFDILESLMLLNEGCNI.

A divalent metal cation-binding residues include Asp8, Asp9, Ser42, and Asn94.

Belongs to the SurE nucleotidase family. A divalent metal cation serves as cofactor.

The protein resides in the cytoplasm. It carries out the reaction a ribonucleoside 5'-phosphate + H2O = a ribonucleoside + phosphate. Its function is as follows. Nucleotidase that shows phosphatase activity on nucleoside 5'-monophosphates. This Ehrlichia chaffeensis (strain ATCC CRL-10679 / Arkansas) protein is 5'-nucleotidase SurE.